A 500-amino-acid polypeptide reads, in one-letter code: Probable cytosol aminopeptidase (500 aa).

The Mn(2+) site is built by K264 and D269. The active site involves K276. Mn(2+) is bound by residues D287, D346, and E348. The active site involves R350.

The protein belongs to the peptidase M17 family. Mn(2+) is required as a cofactor.

The protein localises to the cytoplasm. It carries out the reaction Release of an N-terminal amino acid, Xaa-|-Yaa-, in which Xaa is preferably Leu, but may be other amino acids including Pro although not Arg or Lys, and Yaa may be Pro. Amino acid amides and methyl esters are also readily hydrolyzed, but rates on arylamides are exceedingly low.. The catalysed reaction is Release of an N-terminal amino acid, preferentially leucine, but not glutamic or aspartic acids.. In terms of biological role, presumably involved in the processing and regular turnover of intracellular proteins. Catalyzes the removal of unsubstituted N-terminal amino acids from various peptides. This is Probable cytosol aminopeptidase from Rhodopseudomonas palustris (strain BisB5).